The primary structure comprises 1040 residues: Contactin-2 (1040 aa).

Positions 1–30 are cleaved as a signal peptide; sequence MGTATRRKPHLLLVAAVALVSSSAWSSALG. 6 consecutive Ig-like C2-type domains span residues 43–128, 133–222, 239–322, 327–411, 417–504, and 509–603; these read PLSV…AILR, QEFS…SVFS, PSIK…GRII, PEWL…AELA, PDFR…GILS, and TKIT…ATVL. 4 disulfide bridges follow: C61–C111, C155–C207, C261–C306, and C348–C395. N76, N198, and N204 each carry an N-linked (GlcNAc...) asparagine glycan. 4 N-linked (GlcNAc...) asparagine glycosylation sites follow: N461, N477, N498, and N525. Fibronectin type-III domains are found at residues 610-708, 713-810, 815-910, and 915-1006; these read PPGG…TREA, APSG…SAEE, APTK…TMKP, and PPGN…NGGT. Positions 694–720 are disordered; that stretch reads GEPSGPSSKIRTREAAPSVAPSGLSGG. Residues 794–796 carry the Cell attachment site motif; that stretch reads RGD. N830, N904, N918, and N940 each carry an N-linked (GlcNAc...) asparagine glycan. Residues 894 to 919 are disordered; that stretch reads AGTGPASPSANATTMKPPPRRPPGNI. N1012 carries GPI-anchor amidated asparagine lipidation. Positions 1013–1040 are cleaved as a propeptide — removed in mature form; the sequence is MAVRPAPHPGTVISHSVAMLILIGSLEL.

It belongs to the immunoglobulin superfamily. Contactin family.

The protein localises to the cell membrane. In terms of biological role, in conjunction with another transmembrane protein, CNTNAP2, contributes to the organization of axonal domains at nodes of Ranvier by maintaining voltage-gated potassium channels at the juxtaparanodal region. May be involved in cell adhesion. This is Contactin-2 (CNTN2) from Homo sapiens (Human).